The primary structure comprises 109 residues: Probable guanidinium efflux system subunit GdnC (109 aa).

4 helical membrane passes run Trp3 to Ala23, Ala26 to Ala46, Val55 to Phe75, and Ile81 to Thr101.

Belongs to the drug/metabolite transporter (DMT) superfamily. Small multidrug resistance (SMR) (TC 2.A.7.1) family. YkkC/YkkD subfamily. In terms of assembly, the efflux pump is composed of GdnC and GdnD.

It localises to the cell membrane. Its function is as follows. Probably involved in guanidinium transport. This chain is Probable guanidinium efflux system subunit GdnC, found in Bacillus licheniformis (strain ATCC 14580 / DSM 13 / JCM 2505 / CCUG 7422 / NBRC 12200 / NCIMB 9375 / NCTC 10341 / NRRL NRS-1264 / Gibson 46).